Here is a 167-residue protein sequence, read N- to C-terminus: Transcription factor 24 (167 aa).

A compositionally biased stretch (low complexity) spans 1-23 (MDRGRPAGSPLSASAEPAPLAAA). Residues 1 to 60 (MDRGRPAGSPLSASAEPAPLAAAIRDSRPGRTGPGPAGPGGGSRSGSGRPAAANAARERS) are disordered. Gly residues predominate over residues 32-45 (TGPGPAGPGGGSRS). A compositionally biased stretch (low complexity) spans 46 to 55 (GSGRPAAANA). The 53-residue stretch at 49–101 (RPAAANAARERSRVQTLRHAFLELQRTLPSVPPDTKLSKLDVLLLATTYIAHL) folds into the bHLH domain.

Efficient DNA binding requires dimerization with another bHLH protein.

It localises to the nucleus. Functionally, putative transcription factor. The polypeptide is Transcription factor 24 (TCF24) (Homo sapiens (Human)).